A 297-amino-acid polypeptide reads, in one-letter code: Protoheme IX farnesyltransferase (297 aa).

9 helical membrane-spanning segments follow: residues 12–32, 36–56, 85–105, 108–128, 133–153, 163–183, 209–229, 230–250, and 266–286; these read PGIIFGNLISVIGGFLLAAKG, YALFLATLLGVSLVVASGCVF, VSLVYATVLGIAGFALLYLAA, LAMWLAVMGFVVYVGVYSLYM, VYGTLIGSLSGAAPPVIGYCA, LILLLIFSLWQMPHSYAIAIF, ITLYIIGFMVATLMLTLSGYA, GYKYLIVAASVSVWWLGMALQ, and FIFSIVAINSLSVMMSVDFMV.

The protein belongs to the UbiA prenyltransferase family. Protoheme IX farnesyltransferase subfamily.

Its subcellular location is the cell inner membrane. It catalyses the reaction heme b + (2E,6E)-farnesyl diphosphate + H2O = Fe(II)-heme o + diphosphate. Its pathway is porphyrin-containing compound metabolism; heme O biosynthesis; heme O from protoheme: step 1/1. In terms of biological role, converts heme B (protoheme IX) to heme O by substitution of the vinyl group on carbon 2 of heme B porphyrin ring with a hydroxyethyl farnesyl side group. The sequence is that of Protoheme IX farnesyltransferase from Sodalis glossinidius (strain morsitans).